A 277-amino-acid polypeptide reads, in one-letter code: Diaminopimelate epimerase (277 aa).

Asn11 and Asn65 together coordinate substrate. Catalysis depends on Cys74, which acts as the Proton donor. Residues 75–76 (GN), Asn180, and 198–199 (ER) each bind substrate. Cys208 (proton acceptor) is an active-site residue. 209–210 (GT) contributes to the substrate binding site.

It belongs to the diaminopimelate epimerase family. In terms of assembly, homodimer.

The protein resides in the cytoplasm. It catalyses the reaction (2S,6S)-2,6-diaminopimelate = meso-2,6-diaminopimelate. Its pathway is amino-acid biosynthesis; L-lysine biosynthesis via DAP pathway; DL-2,6-diaminopimelate from LL-2,6-diaminopimelate: step 1/1. Catalyzes the stereoinversion of LL-2,6-diaminopimelate (L,L-DAP) to meso-diaminopimelate (meso-DAP), a precursor of L-lysine and an essential component of the bacterial peptidoglycan. This chain is Diaminopimelate epimerase, found in Gemmatimonas aurantiaca (strain DSM 14586 / JCM 11422 / NBRC 100505 / T-27).